The sequence spans 303 residues: Probable 5-dehydro-4-deoxyglucarate dehydratase (303 aa).

This sequence belongs to the DapA family.

It carries out the reaction 5-dehydro-4-deoxy-D-glucarate + H(+) = 2,5-dioxopentanoate + CO2 + H2O. Its pathway is carbohydrate acid metabolism; D-glucarate degradation; 2,5-dioxopentanoate from D-glucarate: step 2/2. In Acinetobacter baumannii (strain SDF), this protein is Probable 5-dehydro-4-deoxyglucarate dehydratase.